Here is a 333-residue protein sequence, read N- to C-terminus: Probable ABC transporter permease protein y4mJ (333 aa).

A run of 10 helical transmembrane segments spans residues 30-50 (LAIA…VPQA), 62-82 (AGAP…TGGI), 84-104 (LSVG…MASG), 110-130 (ALIG…LVTV), 133-153 (LAPF…AFIV), 175-195 (IPGV…IEIF), 228-248 (FAYV…ISYI), 253-273 (STAG…GGAS), 274-294 (LLGG…ITVI), and 300-320 (LIGI…LIAV).

The protein belongs to the binding-protein-dependent transport system permease family. AraH/RbsC subfamily.

The protein localises to the cell inner membrane. Probably part of the binding-protein-dependent transport system y4mIJK. This system probably transports a sugar. Probably responsible for the translocation of the substrate across the membrane. The polypeptide is Probable ABC transporter permease protein y4mJ (Sinorhizobium fredii (strain NBRC 101917 / NGR234)).